Consider the following 393-residue polypeptide: Bone morphogenetic protein 15 (393 aa).

The signal sequence occupies residues 1-25 (MVLLSILRILLWGLVLFMEHRVQMT). Residues 26-268 (QVGQPSIAHL…DPSLLLRRAR (243 aa)) constitute a propeptide that is removed on maturation. N-linked (GlcNAc...) asparagine glycans are attached at residues N86 and N237. Cystine bridges form between C292–C358, C321–C390, and C325–C392. N-linked (GlcNAc...) asparagine glycosylation is present at N374.

It belongs to the TGF-beta family. Homodimer. But, in contrast to other members of this family, cannot be disulfide-linked.

The protein resides in the secreted. Functionally, may be involved in follicular development. Oocyte-specific growth/differentiation factor that stimulates folliculogenesis and granulosa cell (GC) growth. In Ovis aries (Sheep), this protein is Bone morphogenetic protein 15 (BMP15).